A 349-amino-acid chain; its full sequence is Aspartate carbamoyltransferase catalytic subunit (349 aa).

Residues Arg59 and Thr60 each coordinate carbamoyl phosphate. Lys87 lines the L-aspartate pocket. Residues Arg109, His142, and Gln145 each coordinate carbamoyl phosphate. L-aspartate-binding residues include Arg182 and Arg253. The carbamoyl phosphate site is built by Gly294 and Pro295.

It belongs to the aspartate/ornithine carbamoyltransferase superfamily. ATCase family. As to quaternary structure, heterododecamer (2C3:3R2) of six catalytic PyrB chains organized as two trimers (C3), and six regulatory PyrI chains organized as three dimers (R2).

The catalysed reaction is carbamoyl phosphate + L-aspartate = N-carbamoyl-L-aspartate + phosphate + H(+). The protein operates within pyrimidine metabolism; UMP biosynthesis via de novo pathway; (S)-dihydroorotate from bicarbonate: step 2/3. Its function is as follows. Catalyzes the condensation of carbamoyl phosphate and aspartate to form carbamoyl aspartate and inorganic phosphate, the committed step in the de novo pyrimidine nucleotide biosynthesis pathway. The polypeptide is Aspartate carbamoyltransferase catalytic subunit (Synechococcus sp. (strain CC9605)).